Consider the following 84-residue polypeptide: Putative membrane protein insertion efficiency factor (84 aa).

Belongs to the UPF0161 family.

Its subcellular location is the cell inner membrane. Its function is as follows. Could be involved in insertion of integral membrane proteins into the membrane. The chain is Putative membrane protein insertion efficiency factor from Shewanella halifaxensis (strain HAW-EB4).